Reading from the N-terminus, the 400-residue chain is Probable peptidoglycan glycosyltransferase FtsW (400 aa).

11 helical membrane passes run Leu30–Ile50, Gln65–Leu84, Gly92–Val112, Leu123–Ala143, Phe157–Glu177, Asp179–Ala199, Leu201–Thr221, Thr247–Val267, Phe280–Leu300, Leu321–Asn341, and Leu356–Leu376.

The protein belongs to the SEDS family. FtsW subfamily.

It is found in the cell inner membrane. It carries out the reaction [GlcNAc-(1-&gt;4)-Mur2Ac(oyl-L-Ala-gamma-D-Glu-L-Lys-D-Ala-D-Ala)](n)-di-trans,octa-cis-undecaprenyl diphosphate + beta-D-GlcNAc-(1-&gt;4)-Mur2Ac(oyl-L-Ala-gamma-D-Glu-L-Lys-D-Ala-D-Ala)-di-trans,octa-cis-undecaprenyl diphosphate = [GlcNAc-(1-&gt;4)-Mur2Ac(oyl-L-Ala-gamma-D-Glu-L-Lys-D-Ala-D-Ala)](n+1)-di-trans,octa-cis-undecaprenyl diphosphate + di-trans,octa-cis-undecaprenyl diphosphate + H(+). It functions in the pathway cell wall biogenesis; peptidoglycan biosynthesis. Its function is as follows. Peptidoglycan polymerase that is essential for cell division. The polypeptide is Probable peptidoglycan glycosyltransferase FtsW (Thioalkalivibrio sulfidiphilus (strain HL-EbGR7)).